Reading from the N-terminus, the 37-residue chain is Cytochrome b6-f complex subunit 7 (37 aa).

A helical membrane pass occupies residues 11 to 29; the sequence is AVLLMVLVLVGLAWGFLLL.

This sequence belongs to the PetM family. As to quaternary structure, the 4 large subunits of the cytochrome b6-f complex are cytochrome b6, subunit IV (17 kDa polypeptide, PetD), cytochrome f and the Rieske protein, while the 4 small subunits are PetG, PetL, PetM and PetN. The complex functions as a dimer.

The protein resides in the cellular thylakoid membrane. Component of the cytochrome b6-f complex, which mediates electron transfer between photosystem II (PSII) and photosystem I (PSI), cyclic electron flow around PSI, and state transitions. This Rippkaea orientalis (strain PCC 8801 / RF-1) (Cyanothece sp. (strain PCC 8801)) protein is Cytochrome b6-f complex subunit 7.